A 425-amino-acid chain; its full sequence is Phosphoribosylamine--glycine ligase (425 aa).

Residues 110-317 (KEFMKRHGIP…LFDALLASVE (208 aa)) enclose the ATP-grasp domain. Residue 137 to 198 (ETCPTFPQVI…EAFLSGQEAS (62 aa)) coordinates ATP. Mg(2+) is bound by residues Glu-287 and Asn-289.

The protein belongs to the GARS family. The cofactor is Mg(2+). Mn(2+) is required as a cofactor.

It carries out the reaction 5-phospho-beta-D-ribosylamine + glycine + ATP = N(1)-(5-phospho-beta-D-ribosyl)glycinamide + ADP + phosphate + H(+). It functions in the pathway purine metabolism; IMP biosynthesis via de novo pathway; N(1)-(5-phospho-D-ribosyl)glycinamide from 5-phospho-alpha-D-ribose 1-diphosphate: step 2/2. In Chlorobaculum tepidum (strain ATCC 49652 / DSM 12025 / NBRC 103806 / TLS) (Chlorobium tepidum), this protein is Phosphoribosylamine--glycine ligase.